A 372-amino-acid chain; its full sequence is Chaperone protein DnaJ (372 aa).

The J domain occupies Asp5–Gly70. A CR-type zinc finger spans residues Gly133–His211. Residues Cys146, Cys149, Cys163, Cys166, Cys185, Cys188, Cys199, and Cys202 each contribute to the Zn(2+) site. CXXCXGXG motif repeat units follow at residues Cys146–Gly153, Cys163–Gly170, Cys185–Gly192, and Cys199–Gly206.

This sequence belongs to the DnaJ family. In terms of assembly, homodimer. Zn(2+) serves as cofactor.

The protein resides in the cytoplasm. Participates actively in the response to hyperosmotic and heat shock by preventing the aggregation of stress-denatured proteins and by disaggregating proteins, also in an autonomous, DnaK-independent fashion. Unfolded proteins bind initially to DnaJ; upon interaction with the DnaJ-bound protein, DnaK hydrolyzes its bound ATP, resulting in the formation of a stable complex. GrpE releases ADP from DnaK; ATP binding to DnaK triggers the release of the substrate protein, thus completing the reaction cycle. Several rounds of ATP-dependent interactions between DnaJ, DnaK and GrpE are required for fully efficient folding. Also involved, together with DnaK and GrpE, in the DNA replication of plasmids through activation of initiation proteins. The protein is Chaperone protein DnaJ of Thiobacillus denitrificans (strain ATCC 25259 / T1).